The following is a 590-amino-acid chain: Beta-(1--&gt;2)glucan export ATP-binding/permease protein NdvA (590 aa).

The ABC transmembrane type-1 domain occupies 21–301 (VALICGANVA…MSAFANQISE (281 aa)). 6 consecutive transmembrane segments (helical) span residues 22–42 (ALICGANVALAAIAILEPIMF), 55–75 (VFSTLAVWAGLGAFNVIAFVL), 136–156 (QHLSTAVALVLLVPTALSMDV), 158–178 (MSMVLLGLGVLYVGIGRLVMK), 248–268 (LSSTISMMVVLLIGAYLVTHG), and 275–295 (VIAFTGFATLLISRLDQMSAF). In terms of domain architecture, ABC transporter spans 335 to 569 (VRFEDVGFEF…NGRFASLLRA (235 aa)). 368–375 (GPTGAGKT) contributes to the ATP binding site.

This sequence belongs to the ABC transporter superfamily. Beta-(1--&gt;2)glucan exporter (TC 3.A.1.108.1) family. Homodimer.

It localises to the cell inner membrane. It catalyses the reaction [(1-&gt;2)-beta-D-glucosyl](n)(in) + ATP + H2O = [(1-&gt;2)-beta-D-glucosyl](n)(out) + ADP + phosphate + H(+). Involved in beta-(1--&gt;2)glucan export. Transmembrane domains (TMD) form a pore in the inner membrane and the ATP-binding domain (NBD) is responsible for energy generation. The polypeptide is Beta-(1--&gt;2)glucan export ATP-binding/permease protein NdvA (Mesorhizobium japonicum (strain LMG 29417 / CECT 9101 / MAFF 303099) (Mesorhizobium loti (strain MAFF 303099))).